A 364-amino-acid polypeptide reads, in one-letter code: Chorismate synthase (364 aa).

Residues 41–60 are disordered; sequence MQHDLDRRRPGTSRYTTARR. 2 residues coordinate NADP(+): Arg48 and Arg54. Residues 125–127, 238–239, Gly278, 293–297, and Arg319 each bind FMN; these read RSS, NA, and KPTSS.

It belongs to the chorismate synthase family. Homotetramer. Requires FMNH2 as cofactor.

The enzyme catalyses 5-O-(1-carboxyvinyl)-3-phosphoshikimate = chorismate + phosphate. Its pathway is metabolic intermediate biosynthesis; chorismate biosynthesis; chorismate from D-erythrose 4-phosphate and phosphoenolpyruvate: step 7/7. Functionally, catalyzes the anti-1,4-elimination of the C-3 phosphate and the C-6 proR hydrogen from 5-enolpyruvylshikimate-3-phosphate (EPSP) to yield chorismate, which is the branch point compound that serves as the starting substrate for the three terminal pathways of aromatic amino acid biosynthesis. This reaction introduces a second double bond into the aromatic ring system. In Shewanella baltica (strain OS185), this protein is Chorismate synthase.